Consider the following 291-residue polypeptide: 5'-3' exonuclease (291 aa).

The region spanning 176–269 (APYQVVEYKG…DLTGLKPIQK (94 aa)) is the 5'-3' exonuclease domain.

Functionally, 5'-3' exonuclease acting preferentially on double-stranded DNA. The protein is 5'-3' exonuclease (polA) of Mycoplasma genitalium (strain ATCC 33530 / DSM 19775 / NCTC 10195 / G37) (Mycoplasmoides genitalium).